Reading from the N-terminus, the 42-residue chain is Conodipine-M beta chain (42 aa).

In terms of assembly, heterodimer of an alpha and a beta chains; probably disulfide-linked. In terms of tissue distribution, expressed by the venom duct.

It is found in the secreted. Its function is as follows. Heterodimer: conodipine-M catalyzes the calcium-dependent hydrolysis of the 2-acyl groups in 3-sn-phosphoglycerides. This activity may be supported by the alpha chain. Conodipine-M inhibits the binding of isradipine (a ligand specific for L-type calcium channel) to L-type calcium channels. The protein is Conodipine-M beta chain of Conus magus (Magical cone).